The primary structure comprises 228 residues: MALRTLVSRRTLATGLGFRQQLRGLQTFSLPDLPYNYGALEPAISGDIMQLHHQNHHQTYVTNYNKALEQLHDAISKGDAPTVAKLHSAIKFNGGGHINHSIFWKNLAPVREGGGEPPKGSLGWAIDTNFGSLEALVQKMNAEGAALQGSGWVWLALDKELKKLVVETTANQDPLVTKGPTLVPLLGIDVWEHAYYLQYKNVRPDYLKNIWKVINWKYASEVYEKESP.

Residues 1–24 (MALRTLVSRRTLATGLGFRQQLRG) constitute a mitochondrion transit peptide. Residues H52, H100, D189, and H193 each contribute to the Mn(2+) site.

This sequence belongs to the iron/manganese superoxide dismutase family. As to quaternary structure, homotetramer. It depends on Mn(2+) as a cofactor. As to expression, expressed most abundantly in parts of the plant which exhibit a high metabolic activity. Expressed in pre-shooting flower buds, vegetative buds, immature fruits and fully expanded leaves of basal shoots and seedlings.

The protein resides in the mitochondrion matrix. It carries out the reaction 2 superoxide + 2 H(+) = H2O2 + O2. In terms of biological role, destroys superoxide anion radicals which are normally produced within the cells and which are toxic to biological systems. In Prunus persica (Peach), this protein is Superoxide dismutase [Mn], mitochondrial (SOD).